The primary structure comprises 360 residues: MLLYRKYFIKNILPLLIIVTFSVTSIVWITQILKLLYLFDKGIKVIDFFNLVVLVLPTLLFILLPIITVIAVLYIYNNLKVERQLIILQTSGVNNIQLALPALYVALTIMLLAYYISSTILPLSHINLKSRLNFIKNNYISSMIEEKTFNKITKNITVFIDKKLTGNIMNGIIIFDNRNADNPSVVFAGSGTLNIYGNNPIFELNKGLRQEYDANGNLTQLTFDSLMIKLQNNSSLTSQRTQNNKEANEYYISELLTPSHDLVITKKIKLIAEAHQRIIWPLYNFVLPCLALAVFLRYPYSKKTTFMPVLFSALTVLFVTAIHFILQNFASKNLDFIFACYFNLLVALTIGLYLLVHKRI.

6 helical membrane-spanning segments follow: residues 12–32 (ILPL…ITQI), 52–72 (VVLV…VIAV), 96–116 (IQLA…AYYI), 278–298 (IIWP…FLRY), 306–326 (FMPV…HFIL), and 336–356 (FIFA…YLLV).

Its subcellular location is the cell membrane. This is an uncharacterized protein from Rickettsia prowazekii (strain Madrid E).